The following is a 932-amino-acid chain: von Willebrand factor A domain-containing protein DDB_G0292028 (932 aa).

Residues 1 to 49 (MNFIKKVIGGGSSKSKTDIKIEDEQHEQQHEQQHEKQQIPDKISTSKVN) are disordered. Over residues 15–39 (SKTDIKIEDEQHEQQHEQQHEKQQI) the composition is skewed to basic and acidic residues. Residues 95–222 (LTSPGLNTKV…DVTVNITITS (128 aa)) enclose the VIT domain. The VWFA domain maps to 342–521 (EFIFVLDCSG…IAMQPTLSNI (180 aa)). Disordered stretches follow at residues 661–752 (QQIN…SQAQ) and 800–834 (TSQISQSSRECRSKKSSSPTIQKSSSLPSRPSTSS). The segment covering 677 to 686 (TRVQGSSSVF) has biased composition (polar residues). Residues 815 to 834 (SSSPTIQKSSSLPSRPSTSS) are compositionally biased toward low complexity.

The chain is von Willebrand factor A domain-containing protein DDB_G0292028 from Dictyostelium discoideum (Social amoeba).